Reading from the N-terminus, the 381-residue chain is Alkanesulfonate monooxygenase (381 aa).

Belongs to the SsuD family. Homotetramer.

It catalyses the reaction an alkanesulfonate + FMNH2 + O2 = an aldehyde + FMN + sulfite + H2O + 2 H(+). In terms of biological role, catalyzes the desulfonation of aliphatic sulfonates. This chain is Alkanesulfonate monooxygenase, found in Escherichia coli O7:K1 (strain IAI39 / ExPEC).